A 155-amino-acid chain; its full sequence is 3-hydroxyacyl-[acyl-carrier-protein] dehydratase FabZ (155 aa).

H61 is an active-site residue.

Belongs to the thioester dehydratase family. FabZ subfamily.

It is found in the cytoplasm. It carries out the reaction a (3R)-hydroxyacyl-[ACP] = a (2E)-enoyl-[ACP] + H2O. In terms of biological role, involved in unsaturated fatty acids biosynthesis. Catalyzes the dehydration of short chain beta-hydroxyacyl-ACPs and long chain saturated and unsaturated beta-hydroxyacyl-ACPs. The polypeptide is 3-hydroxyacyl-[acyl-carrier-protein] dehydratase FabZ (Synechococcus sp. (strain ATCC 27144 / PCC 6301 / SAUG 1402/1) (Anacystis nidulans)).